The chain runs to 429 residues: Glutamyl-tRNA reductase (429 aa).

Substrate-binding positions include 50–53 (TCNR), Ser-108, 113–115 (EPQ), and Gln-119. Residue Cys-51 is the Nucleophile of the active site. Residue 188 to 193 (GAGEMI) participates in NADP(+) binding.

Belongs to the glutamyl-tRNA reductase family. Homodimer.

It carries out the reaction (S)-4-amino-5-oxopentanoate + tRNA(Glu) + NADP(+) = L-glutamyl-tRNA(Glu) + NADPH + H(+). It functions in the pathway porphyrin-containing compound metabolism; protoporphyrin-IX biosynthesis; 5-aminolevulinate from L-glutamyl-tRNA(Glu): step 1/2. In terms of biological role, catalyzes the NADPH-dependent reduction of glutamyl-tRNA(Glu) to glutamate 1-semialdehyde (GSA). This is Glutamyl-tRNA reductase from Polaromonas naphthalenivorans (strain CJ2).